The chain runs to 281 residues: NADPH-dependent 7-cyano-7-deazaguanine reductase (281 aa).

87-89 (IES) is a substrate binding site. 89–90 (SK) contributes to the NADPH binding site. The active-site Thioimide intermediate is C188. The active-site Proton donor is the D195. Residue 227–228 (HE) participates in substrate binding. Position 256–257 (256–257 (RG)) interacts with NADPH. The disordered stretch occupies residues 261–281 (INPYRSTEQDKPAHNNRMARQ).

The protein belongs to the GTP cyclohydrolase I family. QueF type 2 subfamily. As to quaternary structure, homodimer.

Its subcellular location is the cytoplasm. It catalyses the reaction 7-aminomethyl-7-carbaguanine + 2 NADP(+) = 7-cyano-7-deazaguanine + 2 NADPH + 3 H(+). Its pathway is tRNA modification; tRNA-queuosine biosynthesis. In terms of biological role, catalyzes the NADPH-dependent reduction of 7-cyano-7-deazaguanine (preQ0) to 7-aminomethyl-7-deazaguanine (preQ1). The polypeptide is NADPH-dependent 7-cyano-7-deazaguanine reductase (Vibrio campbellii (strain ATCC BAA-1116)).